We begin with the raw amino-acid sequence, 101 residues long: Small ribosomal subunit protein bS18c (101 aa).

The protein belongs to the bacterial ribosomal protein bS18 family. In terms of assembly, part of the 30S ribosomal subunit.

The protein resides in the plastid. Its subcellular location is the chloroplast. The protein is Small ribosomal subunit protein bS18c of Panax ginseng (Korean ginseng).